The sequence spans 401 residues: 8-amino-7-oxononanoate synthase (401 aa).

A substrate-binding site is contributed by R19. Position 106–107 (106–107 (GY)) interacts with pyridoxal 5'-phosphate. H131 contacts substrate. Residues S176, H204, and T233 each coordinate pyridoxal 5'-phosphate. K236 carries the post-translational modification N6-(pyridoxal phosphate)lysine. T350 provides a ligand contact to substrate.

This sequence belongs to the class-II pyridoxal-phosphate-dependent aminotransferase family. BioF subfamily. In terms of assembly, homodimer. Pyridoxal 5'-phosphate is required as a cofactor.

It catalyses the reaction 6-carboxyhexanoyl-[ACP] + L-alanine + H(+) = (8S)-8-amino-7-oxononanoate + holo-[ACP] + CO2. Its pathway is cofactor biosynthesis; biotin biosynthesis. Functionally, catalyzes the decarboxylative condensation of pimeloyl-[acyl-carrier protein] and L-alanine to produce 8-amino-7-oxononanoate (AON), [acyl-carrier protein], and carbon dioxide. The polypeptide is 8-amino-7-oxononanoate synthase (Pseudomonas aeruginosa (strain ATCC 15692 / DSM 22644 / CIP 104116 / JCM 14847 / LMG 12228 / 1C / PRS 101 / PAO1)).